A 338-amino-acid polypeptide reads, in one-letter code: Phenylalanine--tRNA ligase alpha subunit (338 aa).

E252 contacts Mg(2+).

This sequence belongs to the class-II aminoacyl-tRNA synthetase family. Phe-tRNA synthetase alpha subunit type 1 subfamily. In terms of assembly, tetramer of two alpha and two beta subunits. Requires Mg(2+) as cofactor.

The protein localises to the cytoplasm. It carries out the reaction tRNA(Phe) + L-phenylalanine + ATP = L-phenylalanyl-tRNA(Phe) + AMP + diphosphate + H(+). This Pseudomonas fluorescens (strain SBW25) protein is Phenylalanine--tRNA ligase alpha subunit.